A 278-amino-acid chain; its full sequence is Imidazole glycerol phosphate synthase subunit HisF (278 aa).

Catalysis depends on residues Asp11 and Asp130.

The protein belongs to the HisA/HisF family. Heterodimer of HisH and HisF.

Its subcellular location is the cytoplasm. It catalyses the reaction 5-[(5-phospho-1-deoxy-D-ribulos-1-ylimino)methylamino]-1-(5-phospho-beta-D-ribosyl)imidazole-4-carboxamide + L-glutamine = D-erythro-1-(imidazol-4-yl)glycerol 3-phosphate + 5-amino-1-(5-phospho-beta-D-ribosyl)imidazole-4-carboxamide + L-glutamate + H(+). The protein operates within amino-acid biosynthesis; L-histidine biosynthesis; L-histidine from 5-phospho-alpha-D-ribose 1-diphosphate: step 5/9. IGPS catalyzes the conversion of PRFAR and glutamine to IGP, AICAR and glutamate. The HisF subunit catalyzes the cyclization activity that produces IGP and AICAR from PRFAR using the ammonia provided by the HisH subunit. The chain is Imidazole glycerol phosphate synthase subunit HisF from Thermodesulfovibrio yellowstonii (strain ATCC 51303 / DSM 11347 / YP87).